A 305-amino-acid polypeptide reads, in one-letter code: MTGPDTHAVKQFLLALQTNICAELEQLDGEASFKAESWQRAEGGGGTSRVLTQGKLFEQAGVNFSHVKGAAMPASATAHRPELAGRSFEAMGVSLVIHPNNPYIPTTHANVRFFIASKEGADPVWWFGGGFDLTPYYPFKEDVLSWHQTAADLCAPFGEEVYPKYKKWCDDYFFLPHRNETRGVGGLFFDDLNQAGFEQSFAFMRAVGEGFIQAYAPIVERRKALSFGEHERQFQLYRRGRYVEFNLVYDRGTLFGLQTGGRTESILMSMPPLVRWEYGFTPAAGSVEAELYEVYLKPQDWLQQA.

Ser-94 lines the substrate pocket. Residues His-98 and His-108 each contribute to the a divalent metal cation site. Residue His-108 is the Proton donor of the active site. 110-112 (NVR) contributes to the substrate binding site. His-147 and His-177 together coordinate a divalent metal cation. The tract at residues 242-277 (YVEFNLVYDRGTLFGLQTGGRTESILMSMPPLVRWE) is important for dimerization. 260-262 (GGR) is a substrate binding site.

Belongs to the aerobic coproporphyrinogen-III oxidase family. Homodimer. It depends on a divalent metal cation as a cofactor.

It is found in the cytoplasm. It catalyses the reaction coproporphyrinogen III + O2 + 2 H(+) = protoporphyrinogen IX + 2 CO2 + 2 H2O. Its pathway is porphyrin-containing compound metabolism; protoporphyrin-IX biosynthesis; protoporphyrinogen-IX from coproporphyrinogen-III (O2 route): step 1/1. Functionally, involved in the heme biosynthesis. Catalyzes the aerobic oxidative decarboxylation of propionate groups of rings A and B of coproporphyrinogen-III to yield the vinyl groups in protoporphyrinogen-IX. In Shewanella denitrificans (strain OS217 / ATCC BAA-1090 / DSM 15013), this protein is Oxygen-dependent coproporphyrinogen-III oxidase.